A 608-amino-acid polypeptide reads, in one-letter code: Alpha-glycerophosphate oxidase (608 aa).

21–49 is an FAD binding site; sequence DLLIIGGGITGAGVALQAAASGLETGLIE. Residues 393 to 418 form a disordered region; the sequence is SAVSKLESSTSEKHLDPSAVSRGSSL.

Belongs to the FAD-dependent glycerol-3-phosphate dehydrogenase family. It depends on FAD as a cofactor.

Its subcellular location is the cell membrane. The enzyme catalyses sn-glycerol 3-phosphate + O2 = dihydroxyacetone phosphate + H2O2. Its pathway is membrane lipid metabolism; glycerophospholipid metabolism. The sequence is that of Alpha-glycerophosphate oxidase (glpO) from Streptococcus pneumoniae serotype 4 (strain ATCC BAA-334 / TIGR4).